The primary structure comprises 221 residues: MSVIATQMTYKVYMSGTVNGHYFEVEGDGKGRPYEGEQTVKLTVTKGGPLPFAWDILSPQCQYGSIPFTKYPEDIPDYVKQSFPEGFTWERIMNFEDGAVCTVSNDSSIQGNCFTYHVKFSGLNFPPNGPVMQKKTQGWEPHSERLFARGGMLIGNNFMALKLEGGGHYLCEFKTTYKAKKPVKMPGYHYVDRKLDVTNHNKDYTSVEQCEISIARKPVVA.

Positions 62 to 64 form a cross-link, 2-iminomethyl-5-imidazolinone (Gln-Gly); that stretch reads QYG. Y63 is modified ((E)-2,3-didehydrotyrosine).

It belongs to the GFP family. In terms of assembly, homotetramer. Post-translationally, contains a chromophore consisting of modified amino acid residues. The chromophore is formed by autocatalytic backbone condensation between Xaa-N and Gly-(N+2), oxidation of Tyr-(N+1) to didehydrotyrosine, and formation of a double bond to the alpha-amino nitrogen of residue Xaa-N. Maturation of the chromophore requires nothing other than molecular oxygen.

Functionally, thought to play a role in photoprotection of the coral's resident symbiont microalgae's photosystems from photoinhibition caused by high light levels found near the surface of coral reefs. The chain is GFP-like non-fluorescent chromoprotein from Montipora efflorescens (Pore coral).